A 225-amino-acid polypeptide reads, in one-letter code: THAP domain-containing protein 1 B (225 aa).

The THAP-type zinc finger occupies 5–57 (CSAYGCKNRYDKDRPISFHKFPLKRPLLCKKWEAAVRRADFKPTKYSSICSDH). The stretch at 139–194 (VEDTVHQRRRIQQLEEQVDKLRKKLKIANQKCRRQERSLEKLEKEVSEYREAKGSG) forms a coiled coil.

This sequence belongs to the THAP1 family.

Its subcellular location is the nucleus. It localises to the nucleoplasm. DNA-binding transcription regulator that regulates endothelial cell proliferation and G1/S cell-cycle progression. Specifically binds the 5'-[AT]NTNN[GT]GGCA[AGT]-3' core DNA sequence and acts by modulating expression of pRB-E2F cell-cycle target genes. This is THAP domain-containing protein 1 B (thap1-b) from Xenopus laevis (African clawed frog).